The following is a 551-amino-acid chain: HTH-type transcriptional regulator SgrR (551 aa).

The HTH marR-type domain maps to 1 to 116 (MPSARLQQQF…LVSHLGRSFR (116 aa)). A DNA-binding region (H-T-H motif) is located at residues 26–49 (LNELAALLSCSRRHMRTLLNTMQD). Positions 163 to 492 (ELEADIAHHW…IDWQADAARW (330 aa)) are solute-binding.

Its function is as follows. Activates the small RNA gene sgrS under glucose-phosphate stress conditions as well as yfdZ. Represses its own transcription under both stress and non-stress conditions. Might act as a sensor of the intracellular accumulation of phosphoglucose by binding these molecules in its C-terminal solute-binding domain. This Escherichia coli O1:K1 / APEC protein is HTH-type transcriptional regulator SgrR.